A 520-amino-acid polypeptide reads, in one-letter code: Pleckstrin homology domain-containing family A member 8 (520 aa).

Positions 1 to 93 constitute a PH domain; it reads MEGVLYKWTN…WLVALGSAKA (93 aa). Phosphothreonine is present on Thr139. Ser145 carries the post-translational modification Phosphoserine. Thr153 carries the phosphothreonine modification. Residues 275–285 show a composition bias toward basic and acidic residues; the sequence is GEESLGNHDSD. Residues 275-305 form a disordered region; it reads GEESLGNHDSDLAQPELHSTSSSPESHWEED. The glycolipid transfer protein homology domain stretch occupies residues 311-520; the sequence is TFFSTMNTSF…VHGLESDEVV (210 aa).

In terms of assembly, homodimer. Interacts with ARF1; the interaction together with phosphatidylinositol 4-phosphate binding is required for FAPP2 GlcCer transfer ability.

The protein resides in the cytoplasm. It localises to the golgi apparatus. It is found in the trans-Golgi network membrane. The protein localises to the membrane. Cargo transport protein that is required for apical transport from the trans-Golgi network (TGN). Transports AQP2 from the trans-Golgi network (TGN) to sites of AQP2 phosphorylation. Mediates the non-vesicular transport of glucosylceramide (GlcCer) from the trans-Golgi network (TGN) to the plasma membrane and plays a pivotal role in the synthesis of complex glycosphingolipids. Binding of both phosphatidylinositol 4-phosphate (PIP) and ARF1 are essential for the GlcCer transfer ability. Also required for primary cilium formation, possibly by being involved in the transport of raft lipids to the apical membrane, and for membrane tubulation. In Bos taurus (Bovine), this protein is Pleckstrin homology domain-containing family A member 8 (PLEKHA8).